We begin with the raw amino-acid sequence, 288 residues long: Acetyl-coenzyme A carboxylase carboxyl transferase subunit beta (288 aa).

The region spanning Leu34–Gln288 is the CoA carboxyltransferase N-terminal domain. Zn(2+)-binding residues include Cys38, Cys41, Cys56, and Cys59. The C4-type zinc finger occupies Cys38–Cys59.

It belongs to the AccD/PCCB family. As to quaternary structure, acetyl-CoA carboxylase is a heterohexamer composed of biotin carboxyl carrier protein (AccB), biotin carboxylase (AccC) and two subunits each of ACCase subunit alpha (AccA) and ACCase subunit beta (AccD). Zn(2+) is required as a cofactor.

It is found in the cytoplasm. It catalyses the reaction N(6)-carboxybiotinyl-L-lysyl-[protein] + acetyl-CoA = N(6)-biotinyl-L-lysyl-[protein] + malonyl-CoA. The protein operates within lipid metabolism; malonyl-CoA biosynthesis; malonyl-CoA from acetyl-CoA: step 1/1. Its function is as follows. Component of the acetyl coenzyme A carboxylase (ACC) complex. Biotin carboxylase (BC) catalyzes the carboxylation of biotin on its carrier protein (BCCP) and then the CO(2) group is transferred by the transcarboxylase to acetyl-CoA to form malonyl-CoA. The chain is Acetyl-coenzyme A carboxylase carboxyl transferase subunit beta from Streptococcus pyogenes serotype M28 (strain MGAS6180).